We begin with the raw amino-acid sequence, 265 residues long: MIKIKNLVFRYRNSSNNALDDLTLWIPKGKYVAILGHNGSGKSTLSKILVGLFKPTSGEVEIDGVVLNQESKNLIQSKVGIILQNPDNQFIGATVEDDIAFGLENKMLKSEKIKEIIDFYSEKVGMKEFLKREPQNLSGGQKQRVAIASVLALDPEVIIFDEVTSMLDPLGKHSILELIKDIQEKNSKTLISITHDMDEAIQADYCLVFSAGKLVASGKPADILNNKEIVELAKIDSPFIYKISQKLEGIEPTYDEEHLLEQICK.

The region spanning 2-236 is the ABC transporter domain; that stretch reads IKIKNLVFRY…KEIVELAKID (235 aa). 36–43 serves as a coordination point for ATP; that stretch reads GHNGSGKS.

This sequence belongs to the ABC transporter superfamily. Energy-coupling factor EcfA family. Forms a stable energy-coupling factor (ECF) transporter complex composed of 2 membrane-embedded substrate-binding proteins (S component), 2 ATP-binding proteins (A component) and 2 transmembrane proteins (T component).

The protein resides in the cell membrane. In terms of biological role, ATP-binding (A) component of a common energy-coupling factor (ECF) ABC-transporter complex. Unlike classic ABC transporters this ECF transporter provides the energy necessary to transport a number of different substrates. The polypeptide is Energy-coupling factor transporter ATP-binding protein EcfA1 (Mycoplasmopsis pulmonis (strain UAB CTIP) (Mycoplasma pulmonis)).